We begin with the raw amino-acid sequence, 118 residues long: Fluoride-specific ion channel FluC 1 (118 aa).

2 consecutive transmembrane segments (helical) span residues 1 to 21 (MIQC…RGFV) and 29 to 49 (FNTS…FCIG). Residues G71 and T74 each coordinate Na(+). A helical transmembrane segment spans residues 95-115 (LFILYSILQYGVSFVACLLGY).

The protein belongs to the fluoride channel Fluc/FEX (TC 1.A.43) family.

It is found in the cell membrane. The enzyme catalyses fluoride(in) = fluoride(out). Its activity is regulated as follows. Na(+) is not transported, but it plays an essential structural role and its presence is essential for fluoride channel function. In terms of biological role, fluoride-specific ion channel. Important for reducing fluoride concentration in the cell, thus reducing its toxicity. This is Fluoride-specific ion channel FluC 1 from Staphylococcus saprophyticus subsp. saprophyticus (strain ATCC 15305 / DSM 20229 / NCIMB 8711 / NCTC 7292 / S-41).